A 95-amino-acid polypeptide reads, in one-letter code: Ribosome-binding factor A (95 aa).

It belongs to the RbfA family. In terms of assembly, interacts with the 30S ribosomal subunit as a monomer, binding in a position overlapping the sites of the A and P site tRNAs, and displacing segments of the 16S rRNA. Probably contacts 16S rRNA and ribosomal protein S9 and S13.

The protein resides in the cytoplasm. One of several proteins that assist in the late maturation steps of the functional core of the 30S ribosomal subunit. Associates with free 30S ribosomal subunits (but not with 30S subunits that are part of 70S ribosomes or polysomes). Required for efficient processing of 16S rRNA. Probably interacts with the 5'-terminal helix region of 16S rRNA, bringing together different domains of the 30S ribosomal subunit which aids assembly. The chain is Ribosome-binding factor A from Thermus thermophilus (strain ATCC 27634 / DSM 579 / HB8).